We begin with the raw amino-acid sequence, 449 residues long: SUPPRESSOR OF GAMMA RESPONSE 1 (449 aa).

In terms of domain architecture, NAC spans 58–211 (LPRGVKFDPS…DYVVSKIFYQ (154 aa)). The DNA-binding element occupies 167-217 (RGCKKIMVLYGGKAVKTNWVMHQYHLGIEEDEKEGDYVVSKIFYQQPQQLV). A compositionally biased stretch (basic and acidic residues) spans 324–336 (DDKEEQEKDRDNE). Residues 324-348 (DDKEEQEKDRDNENQGEEDPTWFDS) are disordered.

Phosphorylated in a DNA stress-independent manner. Hyperphosphorylated on SQ motifs upon double-strand breaks, H(2)O(2) or zeocin treatments. Hyperphosphorylation is required for SOG1 function, and unlike constitutive phosphorylation, is ATM dependent. As to expression, expressed in shoot and root apical meristems, in lateral root primordia, in the vasculature of young leaves and in the root stele.

It localises to the nucleus. Transcription factor regulating the transcriptional activation response to gamma irradiation. Required for stem-cell death induced by UVB or by gamma irradiation. Not required for ATM activation, but participates in pathways governed by both ATM and ATR sensor kinases. Involved in DNA damage response (DDR) system that regulates cell cycle arrest. Functional homolog of animal p53. Regulates SMR5 and SMR7 transcription. Regulates DNA repair and cytokinin signaling separately and plays a key role in controlling lateral root formation under genotoxic stress. The polypeptide is SUPPRESSOR OF GAMMA RESPONSE 1 (Arabidopsis thaliana (Mouse-ear cress)).